The primary structure comprises 365 residues: Alanine racemase (365 aa).

K35 functions as the Proton acceptor; specific for D-alanine in the catalytic mechanism. N6-(pyridoxal phosphate)lysine is present on K35. R130 provides a ligand contact to substrate. Y256 (proton acceptor; specific for L-alanine) is an active-site residue. Residue M304 participates in substrate binding.

It belongs to the alanine racemase family. It depends on pyridoxal 5'-phosphate as a cofactor.

It catalyses the reaction L-alanine = D-alanine. Its pathway is amino-acid biosynthesis; D-alanine biosynthesis; D-alanine from L-alanine: step 1/1. Functionally, catalyzes the interconversion of L-alanine and D-alanine. May also act on other amino acids. In Polaromonas naphthalenivorans (strain CJ2), this protein is Alanine racemase (alr).